Here is a 334-residue protein sequence, read N- to C-terminus: Methionine adenosyltransferase 2 subunit beta (334 aa).

Residues 37-40, 60-62, 71-72, cysteine 93, arginine 97, tyrosine 159, and leucine 185 contribute to the NADP(+) site; these read TGLL, FRR, and NL. The residue at position 309 (threonine 309) is a Phosphothreonine. The tract at residues 319–334 is required for interaction with MAT2A; it reads LWPFLIDKRWRQTVFH.

The protein belongs to the dTDP-4-dehydrorhamnose reductase family. MAT2B subfamily. Heterotrimer; composed of a catalytic MAT2A homodimer that binds one regulatory MAT2B chain. Heterohexamer; composed of a central, catalytic MAT2A homotetramer flanked on either side by a regulatory MAT2B chain. NADP binding increases the affinity for MAT2A.

The protein operates within amino-acid biosynthesis; S-adenosyl-L-methionine biosynthesis; S-adenosyl-L-methionine from L-methionine: step 1/1. Functionally, regulatory subunit of S-adenosylmethionine synthetase 2, an enzyme that catalyzes the formation of S-adenosylmethionine from methionine and ATP. Regulates MAT2A catalytic activity by changing its kinetic properties, increasing its affinity for L-methionine. Can bind NADP (in vitro). The polypeptide is Methionine adenosyltransferase 2 subunit beta (MAT2B) (Pongo abelii (Sumatran orangutan)).